The following is a 237-amino-acid chain: Purine nucleoside phosphorylase DeoD-type (237 aa).

H4 contacts a purine D-ribonucleoside. Residues G20, R24, R43, and 87 to 90 each bind phosphate; that span reads RVGT. A purine D-ribonucleoside is bound by residues 179-181 and 203-204; these read EME and SD. The active-site Proton donor is D204.

It belongs to the PNP/UDP phosphorylase family. In terms of assembly, homohexamer; trimer of homodimers.

The enzyme catalyses a purine D-ribonucleoside + phosphate = a purine nucleobase + alpha-D-ribose 1-phosphate. It catalyses the reaction a purine 2'-deoxy-D-ribonucleoside + phosphate = a purine nucleobase + 2-deoxy-alpha-D-ribose 1-phosphate. In terms of biological role, catalyzes the reversible phosphorolytic breakdown of the N-glycosidic bond in the beta-(deoxy)ribonucleoside molecules, with the formation of the corresponding free purine bases and pentose-1-phosphate. The chain is Purine nucleoside phosphorylase DeoD-type from Streptococcus pyogenes serotype M12 (strain MGAS2096).